Reading from the N-terminus, the 305-residue chain is Glutaminase 2 (305 aa).

Residues S61, N113, E158, N165, Y189, Y241, and V259 each contribute to the substrate site.

This sequence belongs to the glutaminase family. As to quaternary structure, homotetramer.

The catalysed reaction is L-glutamine + H2O = L-glutamate + NH4(+). This is Glutaminase 2 from Clostridium perfringens (strain 13 / Type A).